The primary structure comprises 676 residues: DNA ligase (676 aa).

NAD(+) contacts are provided by residues 42–46 (DDVYD), 91–92 (SL), and Glu121. The N6-AMP-lysine intermediate role is filled by Lys123. NAD(+)-binding residues include Arg144, Glu178, Lys294, and Lys318. Residues Cys412, Cys415, Cys430, and Cys435 each contribute to the Zn(2+) site. The BRCT domain maps to 596-676 (NSTSEFTGKR…QLQAAMDETK (81 aa)).

The protein belongs to the NAD-dependent DNA ligase family. LigA subfamily. Requires Mg(2+) as cofactor. The cofactor is Mn(2+).

It catalyses the reaction NAD(+) + (deoxyribonucleotide)n-3'-hydroxyl + 5'-phospho-(deoxyribonucleotide)m = (deoxyribonucleotide)n+m + AMP + beta-nicotinamide D-nucleotide.. Its function is as follows. DNA ligase that catalyzes the formation of phosphodiester linkages between 5'-phosphoryl and 3'-hydroxyl groups in double-stranded DNA using NAD as a coenzyme and as the energy source for the reaction. It is essential for DNA replication and repair of damaged DNA. In Levilactobacillus brevis (strain ATCC 367 / BCRC 12310 / CIP 105137 / JCM 1170 / LMG 11437 / NCIMB 947 / NCTC 947) (Lactobacillus brevis), this protein is DNA ligase.